The sequence spans 575 residues: Transcription factor ncaA (575 aa).

2 stretches are compositionally biased toward polar residues: residues 1-15 (MAETTPSRPNDTPEN) and 22-34 (DNQSQSAGQSKNP). Disordered stretches follow at residues 1 to 40 (MAETTPSRPNDTPENSPGGGDDNQSQSAGQSKNPASVKDR) and 79 to 114 (IRSGITRRQARTSSGKRDTPERAMGKGPSEHFAGGE). The UBZ4-type; degenerate zinc-finger motif lies at 39–66 (DRKCQYCHQAFTSSSLGRHLDQYLFKKK). The span at 93-102 (GKRDTPERAM) shows a compositional bias: basic and acidic residues. The stretch at 337–371 (FAREVEKRKTLDEQLARVQQEANQLRAQVEKLGSC) forms a coiled coil. Residues 429-575 (GRVGVGYGNP…ASGPPPSSGA (147 aa)) are disordered. A compositionally biased stretch (basic and acidic residues) spans 440 to 454 (LDDRSSADTKARATE). Residues 455-471 (EPPASAALASTSTSAPP) are compositionally biased toward low complexity. Residues 472–485 (SAHPPPRALQPAPG) show a composition bias toward pro residues. 2 stretches are compositionally biased toward polar residues: residues 493-513 (DQSSSHTGGASAPSSQNTSPY) and 538-558 (SAANPSATAPNTWNPHSHQSL).

Interacts with atrR.

The protein localises to the nucleus. Transcription factor required for normal voriconazole resistance. Contributes to the function of atrR and regulates the expression of the atrR target gene abcG1. This chain is Transcription factor ncaA, found in Aspergillus fumigatus (strain ATCC MYA-4609 / CBS 101355 / FGSC A1100 / Af293) (Neosartorya fumigata).